The sequence spans 349 residues: Nitrilase, bromoxynil-specific (349 aa).

The CN hydrolase domain maps to 5-274 (FKAAAVQAEP…EGIVYAEIDL (270 aa)). Glu-45 acts as the Proton acceptor in catalysis. The Proton donor role is filled by Lys-127. Cys-161 functions as the Nucleophile in the catalytic mechanism.

The protein belongs to the carbon-nitrogen hydrolase superfamily. Nitrilase family. Homodimer.

The catalysed reaction is a nitrile + 2 H2O = a carboxylate + NH4(+). Functionally, specific for the herbicide bromoxynil (3,5-dibromo-4-hydroxybenzonitrile); converts it to its metabolite 3,5-dibromo-4-hydroxybenzoic acid. This Klebsiella pneumoniae subsp. ozaenae protein is Nitrilase, bromoxynil-specific (bxn).